Here is a 307-residue protein sequence, read N- to C-terminus: Acetaldehyde dehydrogenase (307 aa).

The active-site Acyl-thioester intermediate is the C131. NAD(+) contacts are provided by residues 162–170 (SIGPGTRKN) and N273.

Belongs to the acetaldehyde dehydrogenase family.

The enzyme catalyses acetaldehyde + NAD(+) + CoA = acetyl-CoA + NADH + H(+). The sequence is that of Acetaldehyde dehydrogenase (nahO) from Stutzerimonas stutzeri (Pseudomonas stutzeri).